A 717-amino-acid chain; its full sequence is Amino-acid acetyltransferase, mitochondrial (717 aa).

The transit peptide at 1 to 23 (MFIWTKAPARGLGKASKILPKRD) directs the protein to the mitochondrion. Residues 35-70 (KQFHTATTSVRRSSSSAKERQRAERQQLTRLLKESP) form a disordered region. Positions 39–50 (TATTSVRRSSSS) are enriched in low complexity. The span at 51–70 (AKERQRAERQQLTRLLKESP) shows a compositional bias: basic and acidic residues. The 174-residue stretch at 518–691 (NPSIELADDP…GDVDDAKKRD (174 aa)) folds into the N-acetyltransferase domain.

The protein belongs to the acetyltransferase family.

The protein localises to the mitochondrion. The enzyme catalyses L-glutamate + acetyl-CoA = N-acetyl-L-glutamate + CoA + H(+). The protein operates within amino-acid biosynthesis; L-arginine biosynthesis; N(2)-acetyl-L-ornithine from L-glutamate: step 1/4. Functionally, N-acetylglutamate synthase involved in arginine biosynthesis. The sequence is that of Amino-acid acetyltransferase, mitochondrial (arg2) from Pyrenophora tritici-repentis (strain Pt-1C-BFP) (Wheat tan spot fungus).